Here is a 747-residue protein sequence, read N- to C-terminus: Flowering time control protein FCA (747 aa).

The disordered stretch occupies residues 80–101 (YSVRPTTPPVQQPLSGQKRGYP). 2 consecutive RRM domains span residues 120-201 (VKLF…YADG) and 211-291 (FKLF…FAEP). The segment covering 291–301 (PKRPKPGESRE) has biased composition (basic and acidic residues). Residues 291 to 503 (PKRPKPGESR…QQPLQKMQHP (213 aa)) form a disordered region. Polar residues-rich tracts occupy residues 320-353 (RPTS…SNTG) and 395-406 (SSSATLQQQNRA). Over residues 448–460 (SSQLPTSQLPPQQ) the composition is skewed to low complexity. Positions 461–498 (NISRATAPQTPLNINLRPTTVSSATVQFPPRSQQQPLQ) are enriched in polar residues. The 34-residue stretch at 591-624 (GSVKCTWTEHTSPDGFKYYYNGLTGESKWEKPEE) folds into the WW domain. Basic and acidic residues predominate over residues 630 to 641 (REQQKQQQHQEK). Disordered regions lie at residues 630-707 (REQQ…SGIG) and 722-747 (AASM…KNKA). Low complexity predominate over residues 642–673 (PTIQQSQTQLQPLQQQPQQVQQQYQGQQLQQP). Composition is skewed to polar residues over residues 674 to 707 (FYSS…SGIG) and 726 to 739 (NDIS…QSPQ).

In terms of assembly, interacts (via C-terminus) with SWI3B and (via WW domain) with FY (via PPLPP motifs). In terms of tissue distribution, constitutively expressed, but the negative feedback maintains the active isoform a low level throughout much of the plant, except in meristematic cells at a specific time in development.

The protein localises to the nucleus. Its function is as follows. Plays a major role in the promotion of the transition of the vegetative meristem to reproductive development. Plays a role in the regulation of flowering time in the autonomous flowering pathway by decreasing FLOWERING LOCUS C mRNA levels. Required for RNA-mediated chromatin silencing of a range of loci in the genome. Cotranscriptionally recognizes aberrant RNA and marks it for silencing. Controls alternative cleavage and polyadenylation on pre-mRNAs and antisense RNAs. Acts redundantly with FPA to prevent the expression of distally polyadenylated antisense RNAs at the FLC locus. This is Flowering time control protein FCA (FCA) from Arabidopsis thaliana (Mouse-ear cress).